A 438-amino-acid chain; its full sequence is Enolase (438 aa).

Residue Gln174 participates in (2R)-2-phosphoglycerate binding. Glu216 serves as the catalytic Proton donor. Asp253, Glu297, and Asp324 together coordinate Mg(2+). (2R)-2-phosphoglycerate is bound by residues Lys349, Arg378, Ser379, and Lys400. The active-site Proton acceptor is the Lys349.

This sequence belongs to the enolase family. As to quaternary structure, component of the RNA degradosome, a multiprotein complex involved in RNA processing and mRNA degradation. Mg(2+) serves as cofactor.

The protein localises to the cytoplasm. It localises to the secreted. Its subcellular location is the cell surface. The enzyme catalyses (2R)-2-phosphoglycerate = phosphoenolpyruvate + H2O. It participates in carbohydrate degradation; glycolysis; pyruvate from D-glyceraldehyde 3-phosphate: step 4/5. Catalyzes the reversible conversion of 2-phosphoglycerate (2-PG) into phosphoenolpyruvate (PEP). It is essential for the degradation of carbohydrates via glycolysis. This Psychrobacter sp. (strain PRwf-1) protein is Enolase.